The following is a 93-amino-acid chain: Cell division topological specificity factor (93 aa).

Belongs to the MinE family.

Prevents the cell division inhibition by proteins MinC and MinD at internal division sites while permitting inhibition at polar sites. This ensures cell division at the proper site by restricting the formation of a division septum at the midpoint of the long axis of the cell. The polypeptide is Cell division topological specificity factor (Syntrophus aciditrophicus (strain SB)).